We begin with the raw amino-acid sequence, 563 residues long: Arginine--tRNA ligase (563 aa).

A 'HIGH' region motif is present at residues 122-132 (PNIAKPISMGH).

The protein belongs to the class-I aminoacyl-tRNA synthetase family. As to quaternary structure, monomer.

Its subcellular location is the cytoplasm. It catalyses the reaction tRNA(Arg) + L-arginine + ATP = L-arginyl-tRNA(Arg) + AMP + diphosphate. This is Arginine--tRNA ligase from Latilactobacillus sakei subsp. sakei (strain 23K) (Lactobacillus sakei subsp. sakei).